Reading from the N-terminus, the 291-residue chain is Light-independent protochlorophyllide reductase iron-sulfur ATP-binding protein (291 aa).

ATP is bound by residues 10-15 (GIGKST) and Lys-39. Position 14 (Ser-14) interacts with Mg(2+). Positions 95 and 129 each coordinate [4Fe-4S] cluster. ATP is bound at residue 180–181 (NR).

The protein belongs to the NifH/BchL/ChlL family. As to quaternary structure, homodimer. Protochlorophyllide reductase is composed of three subunits; ChlL, ChlN and ChlB. Requires [4Fe-4S] cluster as cofactor.

The protein resides in the plastid. It localises to the chloroplast. It catalyses the reaction chlorophyllide a + oxidized 2[4Fe-4S]-[ferredoxin] + 2 ADP + 2 phosphate = protochlorophyllide a + reduced 2[4Fe-4S]-[ferredoxin] + 2 ATP + 2 H2O. The protein operates within porphyrin-containing compound metabolism; chlorophyll biosynthesis (light-independent). In terms of biological role, component of the dark-operative protochlorophyllide reductase (DPOR) that uses Mg-ATP and reduced ferredoxin to reduce ring D of protochlorophyllide (Pchlide) to form chlorophyllide a (Chlide). This reaction is light-independent. The L component serves as a unique electron donor to the NB-component of the complex, and binds Mg-ATP. The polypeptide is Light-independent protochlorophyllide reductase iron-sulfur ATP-binding protein (Picea abies (Norway spruce)).